We begin with the raw amino-acid sequence, 1150 residues long: MSKKKPIVQYYDPFDLWPSIATDIESKIPLRNLQWVESYQYKKHTITSLDLEFLPWLEEFSSQDTSKDPTLLNIPLVNMLFLPEQDGEIYKTQHKPLATKWFQKVSKNENQSWMIVLVAEAQQAKRSNSLRRTHSRSSSYFAVKSTIDRVRGDFNTGNINHCVRLDYVRFGTPDAEGWNEFLKCLEWAVLSSLDSRFLQLSEQIRSIKLFDSSIFSDYLLFFLQKERLAASFFDLVLYRESLEQCEDMFSTLSKIISAIDGKKENISKYLGEGSDAQPDLKDFNSSFLILGSRYNTLHNLLADGDFTLFHFTLFLLSKIILLNLKISDYEKAFSTLQQALLFLTSSFFNEFVQNNLEIIAAFNYDCYTLLFKKITEAIHNNDTPIPLCCAKILLYARRQLTRMARWNNLIDDSSPLLWREPSFPLIEHHDNSLLDNRFQKLSETISSTSSFLSEYYRLSSEALSIFKAYKNRYSFVNTACDTGLAQYLLEDYENAYASLKNVDVQTAWSNDPLEEKWSKFYVDLLEKLEKFDEALEFASAISKGKVSIYNKNKILELSKKTAKSKVWNLDDFFTIEIPHMMAVVPHDDGINLSFMCESKVFDLESVDSVTCNYVLSSSKNPMNLLFTLHNSITDGKLNVHCNDIIPGRYHLKTIVFKLKDSVLSFQKDCLHSNKQIEVLNPTKHSNHLYILQSKISQQFQNDGIFACIPIMFGERFYKASCSEIKLSYIENSGFTNLEKSFLSEESHCGLESKTDSLVIKNIQKVPGVAKLYIPLTNTPVEGNEFLINLSYILESGQTVRFGKVLHIENAGIVEANCEKTNNMRDPLTSTIFLHIQPKEPIIFCSWNCMRKTKQGTYDNVFDIPYNIPVLSPMDCFTSCHFDSDMSIDLKFSMNCLRLADVVFMKLCVNIWERFDFIDIEHIMPLLDHACQQISLSNITQGTVVLPEEIRKLNGKKILNSFFDNEELRNEFSEFIQHLESEVSFNSLRSFVQEFEKKERLKNLPFYFSLHQTIGPLPFKDEMQSTTIEYIWKIPQKVLLNKPTEITLTFLRSLTHSKKEKQGQSFEIFYNFPAYTTTILFAGPTQRKIVWEKNQTTAQEQVTAVFLTAGRVMLPEVVVHSKDDDISILKNTKYTLVGRPLNDQPDLDYAP.

Belongs to the TMEM1 family.

This is an uncharacterized protein from Schizosaccharomyces pombe (strain 972 / ATCC 24843) (Fission yeast).